Here is a 497-residue protein sequence, read N- to C-terminus: Acetyltransferase adrJ (497 aa).

Active-site proton acceptor residues include His174 and Asp422. The interval 430–451 (SSAQSSSQNTQKKGKPSYVNGV) is disordered.

This sequence belongs to the plant acyltransferase family. In terms of assembly, monomer.

The protein operates within secondary metabolite biosynthesis; terpenoid biosynthesis. In terms of biological role, acetyltransferase; part of the gene cluster that mediates the biosynthesis of andrastins, meroterpenoid compounds that exhibit inhibitory activity against ras farnesyltransferase, suggesting that they could be promising leads for antitumor agents. The first step of the pathway is the synthesis of 3,5-dimethylorsellinic acid (DMOA) by the polyketide synthase adrD via condensation of one acetyl-CoA starter unit with 3 malonyl-CoA units and 2 methylations. DMAO is then converted to farnesyl-DMAO by the prenyltransferase adrG. The methyltransferase adrK catalyzes the methylation of the carboxyl group of farnesyl-DMAO to farnesyl-DMAO methyl ester which is further converted to epoxyfarnesyl-DMAO methyl ester by the FAD-dependent monooxygenase adrH. The terpene cyclase adrI then catalyzes the carbon skeletal rearrangement to generate the andrastin E, the first compound in the pathway having the andrastin scaffold, with the tetracyclic ring system. The post-cyclization tailoring enzymes adrF, adrE, adrJ, and adrA, are involved in the conversion of andrastin E into andrastin A. The short chain dehydrogenase adrF is responsible for the oxidation of the C-3 a hydroxyl group of andrastin E to yield the corresponding ketone, andrastin D. The ketoreductase adrE stereoselectively reduces the carbonyl moiety to reverse the stereochemistry of the C-3 position to yield andrastin F. The acetyltransferase adrJ is the acetyltransferase that attaches the acetyl group to the C-3 hydroxyl group of andrastin F to yield andrastin C. Finally, the cytochrome P450 monooxygenase adrA catalyzes two sequential oxidation reactions of the C-23 methyl group, to generate the corresponding alcohol andrastin B, and aldehyde andrastin A. The chain is Acetyltransferase adrJ from Penicillium rubens (strain ATCC 28089 / DSM 1075 / NRRL 1951 / Wisconsin 54-1255) (Penicillium chrysogenum).